We begin with the raw amino-acid sequence, 917 residues long: Dolichyl-phosphooligosaccharide-protein glycotransferase (917 aa).

The segment covering 1–10 (MTENNEKVKN) has biased composition (basic and acidic residues). Positions 1–20 (MTENNEKVKNSDSANNQSSK) are disordered. The Cytoplasmic segment spans residues 1–38 (MTENNEKVKNSDSANNQSSKNSKFNFNFEDKKVKCAKT). Low complexity predominate over residues 11–20 (SDSANNQSSK). Residues 39–59 (ILIIIFLAFLSFQMRAQTADM) form a helical membrane-spanning segment. Residues 60–154 (GFTTNEQYLD…AMDSTVTLMN (95 aa)) are Extracellular-facing. The DXD motif 1 motif lies at 82 to 84 (ALD). Residue D84 coordinates Mn(2+). A helical membrane pass occupies residues 155-175 (AAFWVPAILSMFLITPIFFTV). Residues 176 to 182 (RRITSSD) are Cytoplasmic-facing. The helical transmembrane segment at 183–203 (IGGAVAAILASLSPSIFVKTV) threads the bilayer. The Extracellular segment spans residues 204–209 (AGFSDT). D208 contributes to the Mn(2+) binding site. The short motif at 208–210 (DTP) is the DXD motif 2 element. The helical transmembrane segment at 210–230 (PILEILPLLFIVWFIIEAIHY) threads the bilayer. Over 231–237 (SKEKNYK) the chain is Cytoplasmic. The helical transmembrane segment at 238-260 (SLIYGLLATLMLALYPFMWSAWW) threads the bilayer. Residues 261 to 263 (YGY) are Extracellular-facing. The chain crosses the membrane as a helical span at residues 264-286 (YIVIAFLVIYAIYKGISYNSIAK). At 287–308 (YTKSKNNNHKDKIESEKLEMLN) the chain is on the cytoplasmic side. The chain crosses the membrane as a helical span at residues 309 to 329 (ILKISGLFIIGGAVLITALYG). Topologically, residues 330–372 (VSTTMNALQAPLNYLGLDEVSSQTGWPNVLTTVSELDTASLDE) are extracellular. Residues 361-364 (TVSE) carry the TIXE motif motif. A Mn(2+)-binding site is contributed by E364. The helical transmembrane segment at 373–393 (IISSSLGSIHLFAIGLIGIFL) threads the bilayer. The Cytoplasmic segment spans residues 394 to 413 (SLFRKVLTPVKQISNGLAEK). The chain crosses the membrane as a helical span at residues 414–434 (LDIKYALLLIIWFAVTFLAAS). Topologically, residues 435–438 (KGVR) are extracellular. A glycophospholipid is bound at residue R438. The helical transmembrane segment at 439–459 (FVALMVPPLSIGVGIFVGFIE) threads the bilayer. The Cytoplasmic portion of the chain corresponds to 460–469 (QFIKNNLDKK). The chain crosses the membrane as a helical span at residues 470 to 490 (YEYVAYPTIAIIVLYALFTIY). Residues 491-506 (RADSADLVRMLLPSNY) lie on the Extracellular side of the membrane. The chain crosses the membrane as a helical span at residues 507–527 (VPIAEGIMLASLAVLIIYKVA). At 528–541 (ELIAESNKKLVMNK) the chain is on the cytoplasmic side. The chain crosses the membrane as a helical span at residues 542–562 (IFMILLAIGLITPTIATIVPF). Residues 563 to 917 (YSVPTYNDGW…FSVDYGNYSK (355 aa)) lie on the Extracellular side of the membrane. Positions 592 to 594 (WWD) are interacts with target acceptor peptide in protein substrate. Residues 592 to 596 (WWDNG) carry the WWDYG motif motif. The MI motif signature appears at 719–726 (MTSIASVW).

Belongs to the STT3 family. Mn(2+) serves as cofactor. Requires Mg(2+) as cofactor.

It is found in the cell membrane. It catalyses the reaction an archaeal dolichyl phosphooligosaccharide + [protein]-L-asparagine = an archaeal dolichyl phosphate + a glycoprotein with the oligosaccharide chain attached by N-beta-D-glycosyl linkage to a protein L-asparagine.. Its pathway is cell surface structure biogenesis; S-layer biogenesis. The protein operates within protein modification; protein glycosylation. Its function is as follows. Oligosaccharyl transferase (OST) that catalyzes the initial transfer of a defined glycan (ManNAcGlc-2,3-diNAcAGlcNAc in M.voltae) from the lipid carrier dolichol-monophosphate to an asparagine residue within an Asn-X-Ser/Thr consensus motif in nascent polypeptide chains, the first step in protein N-glycosylation. Involved in the assembly of an N-linked disaccharide that decorates the S-layer glycoprotein and flagellins. This Methanococcus voltae protein is Dolichyl-phosphooligosaccharide-protein glycotransferase.